We begin with the raw amino-acid sequence, 204 residues long: Glutathione S-transferase GST-4.5 (204 aa).

Residues 1–77 (MKLYTKPGAC…YIADTAPLTG (77 aa)) enclose the GST N-terminal domain. Residues C10, V49, 61–62 (QN), and H102 each bind glutathione. Residues 83–204 (TARSRAEINR…QAALQAEGLN (122 aa)) enclose the GST C-terminal domain.

The protein belongs to the GST superfamily. As to quaternary structure, homodimer.

It localises to the cytoplasm. The enzyme catalyses RX + glutathione = an S-substituted glutathione + a halide anion + H(+). Its function is as follows. Conjugation of reduced glutathione to a wide number of exogenous and endogenous hydrophobic electrophiles. In Xanthomonas campestris pv. campestris (strain ATCC 33913 / DSM 3586 / NCPPB 528 / LMG 568 / P 25), this protein is Glutathione S-transferase GST-4.5 (gst).